The primary structure comprises 347 residues: MIEKRKEEHIRIAENENVSAFHNYWDDVYLMHEADPEVNYDDIDTGVDFLGKHLGFPMVISSMTGGAEIAKKINYNLATVAEKYQLAMGVGSMRAAIVNRSLSDTYSVINERNVPIKIANIGAPQLVPQGKEAIDEKDIAYIYDLIKADFLAVHFNFLQEMVQPEGDRNAEGVIKRIKELSGSFNIIAKETGSGFSKATAQRLADAGVKAIEVSGLSGTTFAAVEYYRAKNEGNAEKMRIGETFWNWGIPSPASVYYCSDVLPVIGSGGLRNGLDLAKAISLGASLGGFARTLLKDADQSVEAVSRNVEMIEREFKVAMFLTGNKNVYELRKTKKVIGEPLKEWMEV.

5-6 serves as a coordination point for substrate; the sequence is RK. FMN contacts are provided by residues Ser-61, 62-64, Ser-92, and Asn-120; that span reads SMT. 92–94 contributes to the substrate binding site; it reads SMR. Gln-159 provides a ligand contact to substrate. Position 160 (Glu-160) interacts with Mg(2+). FMN is bound by residues Lys-189, Ser-214, Thr-219, 269 to 271, and 290 to 291; these read GLR and AR.

It belongs to the IPP isomerase type 2 family. In terms of assembly, homooctamer. Dimer of tetramers. It depends on FMN as a cofactor. NADPH is required as a cofactor. Mg(2+) serves as cofactor.

The protein localises to the cytoplasm. The catalysed reaction is isopentenyl diphosphate = dimethylallyl diphosphate. Functionally, involved in the biosynthesis of isoprenoids. Catalyzes the 1,3-allylic rearrangement of the homoallylic substrate isopentenyl (IPP) to its allylic isomer, dimethylallyl diphosphate (DMAPP). The chain is Isopentenyl-diphosphate delta-isomerase from Thermoplasma volcanium (strain ATCC 51530 / DSM 4299 / JCM 9571 / NBRC 15438 / GSS1).